Reading from the N-terminus, the 380-residue chain is Alcohol dehydrogenase 1 (380 aa).

Zn(2+) is bound by residues C48, T50, H70, C100, C103, C106, C114, and C178. T50 and H70 together coordinate an alcohol. T50 contributes to the NAD(+) binding site. Residues 203-208 (GLGAVG), D227, R232, T273, V296, 296-298 (VGV), and R373 each bind NAD(+).

This sequence belongs to the zinc-containing alcohol dehydrogenase family. Homodimer. It depends on Zn(2+) as a cofactor.

It localises to the cytoplasm. It catalyses the reaction a primary alcohol + NAD(+) = an aldehyde + NADH + H(+). The enzyme catalyses a secondary alcohol + NAD(+) = a ketone + NADH + H(+). This Trifolium repens (Creeping white clover) protein is Alcohol dehydrogenase 1 (ADH1).